A 237-amino-acid chain; its full sequence is 3-oxoacyl-[acyl-carrier-protein] reductase (237 aa).

M1 is modified (N-acetylmethionine). NADP(+)-binding positions include 11–14, 34–35, D56, and 83–85; these read SRGI, RN, and AAG. A substrate-binding site is contributed by S135. NADP(+) is bound by residues Y148, K152, and 181 to 183; that span reads IHT. Y148 (proton acceptor) is an active-site residue. Position 195 is an N6-acetyllysine (K195).

It belongs to the short-chain dehydrogenases/reductases (SDR) family. As to quaternary structure, homotetramer (in vitro). Heterotetramer with HSD17B8; contains two molecules each of HSD17B8 and CBR4. Does not form homotetramers when HSD17B8 is coexpressed, only heterotetramers (in vitro).

The protein localises to the mitochondrion matrix. The catalysed reaction is a (3R)-hydroxyacyl-[ACP] + NADP(+) = a 3-oxoacyl-[ACP] + NADPH + H(+). It catalyses the reaction a quinone + NADPH + H(+) = a quinol + NADP(+). The protein operates within lipid metabolism; fatty acid biosynthesis. In terms of biological role, component of the heterotetramer complex KAR (3-ketoacyl-[acyl carrier protein] reductase or 3-ketoacyl-[ACP] reductase) that forms part of the mitochondrial fatty acid synthase (mtFAS). Beta-subunit of the KAR heterotetramer complex, responsible for the 3-ketoacyl-ACP reductase activity of the mtFAS, reduces 3-oxoacyl-[ACP] to (3R)-hydroxyacyl-[ACP] in a NADPH-dependent manner with no chain length preference, thereby participating in mitochondrial fatty acid biosynthesis. The homotetramer has NADPH-dependent quinone reductase activity (in vitro), hence could play a role in protection against cytotoxicity of exogenous quinones. As a heterotetramer, it can also reduce 9,10-phenanthrenequinone, 1,4-benzoquinone and various other o-quinones and p-quinones (in vitro). This Bos taurus (Bovine) protein is 3-oxoacyl-[acyl-carrier-protein] reductase (CBR4).